Reading from the N-terminus, the 201-residue chain is 3-isopropylmalate dehydratase small subunit (201 aa).

Belongs to the LeuD family. LeuD type 1 subfamily. As to quaternary structure, heterodimer of LeuC and LeuD.

The enzyme catalyses (2R,3S)-3-isopropylmalate = (2S)-2-isopropylmalate. The protein operates within amino-acid biosynthesis; L-leucine biosynthesis; L-leucine from 3-methyl-2-oxobutanoate: step 2/4. Catalyzes the isomerization between 2-isopropylmalate and 3-isopropylmalate, via the formation of 2-isopropylmaleate. The chain is 3-isopropylmalate dehydratase small subunit from Allorhizobium ampelinum (strain ATCC BAA-846 / DSM 112012 / S4) (Agrobacterium vitis (strain S4)).